A 244-amino-acid chain; its full sequence is Cell adhesion molecule CEACAM4 (244 aa).

The first 35 residues, 1 to 35 (MGPPSAAPRGGHRPWQGLLITASLLTFWHPPTTVQ), serve as a signal peptide directing secretion. An Ig-like V-type domain is found at 36-139 (FTIEALPSSA…DSDQATGQLH (104 aa)). At 36 to 155 (FTIEALPSSA…PGLPVGAVAG (120 aa)) the chain is on the extracellular side. N-linked (GlcNAc...) asparagine glycans are attached at residues Asn-57, Asn-104, Asn-111, and Asn-126. Residues 156 to 176 (IVTGVLVGVALVAALVCFLLL) form a helical membrane-spanning segment. At 177 to 244 (SRTGRASIQR…QIDHKADVVS (68 aa)) the chain is on the cytoplasmic side. The interval 186–215 (RDLREQPPPASTPGHGPSHRSTFSAPLPSP) is disordered. An ITAM motif is present at residues 222–236 (YEELLYSDANIYCQI).

It belongs to the immunoglobulin superfamily. CEA family. In terms of assembly, interacts through its phosphorylated ITAM domain with the SH2 domain-containing cytoplasmic proteins involved in signaling processes during phagocytosis. N-glycosylated. Post-translationally, the cytoplasmic ITAM-like sequence becomes tyrosine phosphorylated by SRC family PTKs upon ligand-mediated receptor clustering and allows to initiate phagocytosis of bound ligand. In terms of tissue distribution, granulocytes.

The protein resides in the membrane. Granulocyte orphan receptor that acts as an trigger efficient phagocytosis of attached particles. This chain is Cell adhesion molecule CEACAM4, found in Homo sapiens (Human).